A 404-amino-acid polypeptide reads, in one-letter code: MHC class I-like protein MILL1 (404 aa).

Residues 1 to 30 (MMLSRDLRAEAAVRLWIMFLLLEDLLGACA) form the signal peptide. The interval 59 to 150 (EVAGPHTLRY…VTGQKGQDKG (92 aa)) is alpha-1. Asn-98, Asn-102, and Asn-165 each carry an N-linked (GlcNAc...) asparagine glycan. The alpha-2 stretch occupies residues 151–242 (LHILQATLGC…SLRSEPLDTG (92 aa)). Intrachain disulfides connect Cys-160/Cys-223 and Cys-262/Cys-322. In terms of domain architecture, Ig-like C1-type spans 224 to 338 (PAQLQRHLAS…GNIEKRAVIV (115 aa)). The segment at 243 to 342 (SPMVIVTFRN…KRAVIVNTVS (100 aa)) is alpha-3. N-linked (GlcNAc...) asparagine glycosylation occurs at Asn-323. The tract at residues 343 to 373 (GEKTRQPSTSGVGGRVKKSLWTTMTTAFMVT) is connecting peptide. The GPI-anchor amidated serine moiety is linked to residue Ser-374. A propeptide spans 375-404 (WTRKTGGDSTLLLLWWLLFFSTVLAVLTLV) (removed in mature form).

This sequence belongs to the MHC class I family. Heterodimer with B2M. Detected in skin, esophagus, tongue, skin, muscle, uterus, ovary, testis and epididymis.

The protein localises to the cell membrane. In Rattus norvegicus (Rat), this protein is MHC class I-like protein MILL1.